Consider the following 261-residue polypeptide: uncharacterized protein (261 aa).

The N-terminal stretch at 1–22 (MIHSKKLTLGICLVLLIILIGG) is a signal peptide. Residue Cys-23 is the site of N-palmitoyl cysteine attachment. A lipid anchor (S-diacylglycerol cysteine) is attached at Cys-23.

It belongs to the staphylococcal tandem lipoprotein family.

Its subcellular location is the cell membrane. This is an uncharacterized protein from Staphylococcus aureus (strain NCTC 8325 / PS 47).